The primary structure comprises 189 residues: GTPase NRas (189 aa).

GTP-binding positions include 10-18 and 29-30; these read GAGGVGKSA and VD. The Effector region signature appears at 32 to 40; that stretch reads YDPTIEDSY. 57-61 is a binding site for GTP; that stretch reads DTAGQ. Residue Ser-89 is modified to Phosphoserine. A GTP-binding site is contributed by 116-119; the sequence is NKCD. The hypervariable region stretch occupies residues 166–185; the sequence is YRMKKLNSSDDGTQGCLGLS. Residue Lys-170 forms a Glycyl lysine isopeptide (Lys-Gly) (interchain with G-Cter in ubiquitin) linkage. Cys-181 carries the S-palmitoyl cysteine lipid modification. Residue Cys-186 is the site of S-farnesyl cysteine attachment. A propeptide spans 187 to 189 (removed in mature form); that stretch reads AVM.

It belongs to the small GTPase superfamily. Ras family. In terms of assembly, interacts (active GTP-bound form preferentially) with RGS14. Interacts (active GTP-bound form) with RASSF7. Interacts (active GTP-bound form) with both SHOC2 and PP1c (all isoforms) to form a tertiary complex; SHOC2 and PP1c preferably bind M-Ras/MRAS, but they also bind K-Ras/KRAS, N-Ras/NRAS and H-Ras/HRAS. Post-translationally, palmitoylated by the ZDHHC9-GOLGA7 complex. Depalmitoylated by ABHD17A, ABHD17B and ABHD17C. A continuous cycle of de- and re-palmitoylation regulates rapid exchange between plasma membrane and Golgi. In terms of processing, acetylation at Lys-104 prevents interaction with guanine nucleotide exchange factors (GEFs). Ubiquitinated by the BCR(LZTR1) E3 ubiquitin ligase complex at Lys-170 in a non-degradative manner, leading to inhibit Ras signaling by decreasing Ras association with membranes. Post-translationally, phosphorylation at Ser-89 enhances NRAS association with its downstream effectors.

The protein resides in the cell membrane. It localises to the golgi apparatus membrane. The catalysed reaction is GTP + H2O = GDP + phosphate + H(+). With respect to regulation, alternates between an inactive form bound to GDP and an active form bound to GTP. Activated by a guanine nucleotide-exchange factor (GEF) and inactivated by a GTPase-activating protein (GAP). Functionally, ras proteins bind GDP/GTP and possess intrinsic GTPase activity. This is GTPase NRas (NRAS) from Monodelphis domestica (Gray short-tailed opossum).